We begin with the raw amino-acid sequence, 280 residues long: Four and a half LIM domains protein 3 (280 aa).

An N-acetylserine modification is found at serine 2. The segment at 7 to 31 (CAKCSESLYGRKYIQTDDGPYCVPC) adopts a C4-type zinc-finger fold. LIM zinc-binding domains follow at residues 40-92 (CAEC…CNDC) and 101-153 (CSAC…CVPC). Lysine 157 bears the N6-acetyllysine mark. LIM zinc-binding domains are found at residues 162–212 (CARC…CVTC) and 221–275 (CSSC…CQGC). Lysine 235 carries the N6-acetyllysine modification.

In terms of assembly, interacts with SOX15; the interaction recruits FHL3 to FOXK1 promoters where it acts as a transcriptional coactivator of FOXK1.

It is found in the nucleus. It localises to the cytoplasm. In terms of biological role, recruited by SOX15 to FOXK1 promoters where it acts as a transcriptional coactivator of FOXK1. This chain is Four and a half LIM domains protein 3 (FHL3), found in Bos taurus (Bovine).